We begin with the raw amino-acid sequence, 1377 residues long: DNA-directed RNA polymerase subunit beta (1377 aa).

The protein belongs to the RNA polymerase beta chain family. As to quaternary structure, the RNAP catalytic core consists of 2 alpha, 1 beta, 1 beta' and 1 omega subunit. When a sigma factor is associated with the core the holoenzyme is formed, which can initiate transcription.

It catalyses the reaction RNA(n) + a ribonucleoside 5'-triphosphate = RNA(n+1) + diphosphate. Functionally, DNA-dependent RNA polymerase catalyzes the transcription of DNA into RNA using the four ribonucleoside triphosphates as substrates. The polypeptide is DNA-directed RNA polymerase subunit beta (Campylobacter lari (strain RM2100 / D67 / ATCC BAA-1060)).